We begin with the raw amino-acid sequence, 152 residues long: UPF0266 membrane protein YobD (152 aa).

The next 3 membrane-spanning stretches (helical) occupy residues Leu-6 to Met-26, Val-45 to His-65, and Ala-67 to Ile-87.

Belongs to the UPF0266 family.

The protein resides in the cell inner membrane. This is UPF0266 membrane protein YobD from Salmonella paratyphi A (strain ATCC 9150 / SARB42).